The chain runs to 297 residues: Mitochondrial nicotinamide adenine dinucleotide transporter SLC25A52 (297 aa).

Solcar repeat units follow at residues 28-108, 116-200, and 209-296; these read VGEM…LSCL, PEFA…IKEH, and AHLV…LLKF. 6 helical membrane passes run 34–51, 85–105, 118–138, 179–199, 215–235, and 268–289; these read YLCG…TYPI, LPPL…YEDL, FATH…FTPL, ILFR…PIKE, FIGG…INVV, and LFRG…INAT.

This sequence belongs to the mitochondrial carrier (TC 2.A.29) family.

Its subcellular location is the mitochondrion inner membrane. The catalysed reaction is NAD(+)(in) = NAD(+)(out). In terms of biological role, mitochondrial membrane carrier protein that mediates the import of NAD(+) into mitochondria. Compared to SLC25A51, SLC25A52-mediated transport is not essential for the import of NAD(+) in mitochondria. The transport mechanism, uniport or antiport, its electrogenicity and substrate selectivity, remain to be elucidated. The polypeptide is Mitochondrial nicotinamide adenine dinucleotide transporter SLC25A52 (Homo sapiens (Human)).